Consider the following 646-residue polypeptide: Major capsid protein (646 aa).

This sequence belongs to the NCLDV major capsid protein family. Homotrimer. The membrane-bound form, but not the cytosolic one, assembles into large complexes. Interacts with the minor capsid proteins M1249L and p17; these interactions form a rigid zipper structure that stabilizes the capsomers.

Its subcellular location is the virion. The protein resides in the host endoplasmic reticulum membrane. It is found in the host cytoplasm. It localises to the host cytosol. Capsid protein that self-assembles to form the pseudo-hexameric capsomers of the icosahedral capsid. The capsid is constructed of 2760 pseudo-hexameric capsomers and 12 pentameric capsomers, with a T=277 symmetry, about 200 nm in diameter. The capsid encapsulates the DNA-containing nucleoid, the core shell and the inner membrane. Plays an essential role in virion assembly. Involved in virus attachment to the host cell. The protein is Major capsid protein of Ornithodoros (relapsing fever ticks).